Reading from the N-terminus, the 252-residue chain is Imidazole glycerol phosphate synthase subunit HisF (252 aa).

Catalysis depends on residues Asp-11 and Asp-130.

Belongs to the HisA/HisF family. In terms of assembly, heterodimer of HisH and HisF.

It is found in the cytoplasm. The catalysed reaction is 5-[(5-phospho-1-deoxy-D-ribulos-1-ylimino)methylamino]-1-(5-phospho-beta-D-ribosyl)imidazole-4-carboxamide + L-glutamine = D-erythro-1-(imidazol-4-yl)glycerol 3-phosphate + 5-amino-1-(5-phospho-beta-D-ribosyl)imidazole-4-carboxamide + L-glutamate + H(+). The protein operates within amino-acid biosynthesis; L-histidine biosynthesis; L-histidine from 5-phospho-alpha-D-ribose 1-diphosphate: step 5/9. IGPS catalyzes the conversion of PRFAR and glutamine to IGP, AICAR and glutamate. The HisF subunit catalyzes the cyclization activity that produces IGP and AICAR from PRFAR using the ammonia provided by the HisH subunit. This is Imidazole glycerol phosphate synthase subunit HisF from Bacillus cereus (strain AH820).